A 492-amino-acid chain; its full sequence is Excitatory amino acid transporter (492 aa).

Topologically, residues 1–7 (MVSWIRK) are cytoplasmic. Helical transmembrane passes span 8-28 (NLLLVLTVSSVVLGALCGFLL), 47-67 (LLMHMLKMMILPLIMSSLISG), and 85-105 (TYYMFTTAVAVVTGIFLVLVI). Topologically, residues 106-191 (HPGDPTIKKE…VKASVEYTSG (86 aa)) are extracellular. N166 and N176 each carry an N-linked (GlcNAc...) asparagine glycan. 5 helical membrane passes run 192–212 (MNVLGVIVFCIAIGISLSQLG), 228–248 (VIMKLVMTVMWYSPFGILCLI), 270–290 (VTVLSGLAIHSLISLPLIFFV), 358–378 (AVAAIFIAQINGVHLSFGQVV), and 389–409 (IGAASVPSAGLVTMLLVLTAV).

It belongs to the dicarboxylate/amino acid:cation symporter (DAACS) (TC 2.A.23) family.

Its subcellular location is the membrane. Functionally, transports L-glutamate and also L- and D-aspartate. Essential for terminating the postsynaptic action of glutamate by rapidly removing released glutamate from the synaptic cleft. Acts as a symport by cotransporting sodium. The protein is Excitatory amino acid transporter (GLT-1) of Onchocerca volvulus.